Reading from the N-terminus, the 211-residue chain is MYQPDFPTVPFRLGLYPVVDSVAWIERLLEAGVRTIQLRIKDKRDEEVESDVIAAIALGRRYDARLFINDYWRLAIKHRAYGVHLGQEDLETTDLKAIQAAGLRLGVSTHDDMEIDIALAAKPSYIALGHVFPTQTKQMPSAPQGLAQLASHIERLADYPTVAIGGISLERAPAVLATGVGSVAVVSAITQAADWREATAQLLAIAGVGDE.

4-amino-2-methyl-5-(diphosphooxymethyl)pyrimidine is bound by residues 37–41 (QLRIK) and asparagine 69. Residues aspartate 70 and aspartate 89 each contribute to the Mg(2+) site. Position 108 (serine 108) interacts with 4-amino-2-methyl-5-(diphosphooxymethyl)pyrimidine. Residue 134–136 (TQT) participates in 2-[(2R,5Z)-2-carboxy-4-methylthiazol-5(2H)-ylidene]ethyl phosphate binding. Lysine 137 contacts 4-amino-2-methyl-5-(diphosphooxymethyl)pyrimidine. Residues glycine 166 and 186 to 187 (VS) each bind 2-[(2R,5Z)-2-carboxy-4-methylthiazol-5(2H)-ylidene]ethyl phosphate.

It belongs to the thiamine-phosphate synthase family. Mg(2+) is required as a cofactor.

The enzyme catalyses 2-[(2R,5Z)-2-carboxy-4-methylthiazol-5(2H)-ylidene]ethyl phosphate + 4-amino-2-methyl-5-(diphosphooxymethyl)pyrimidine + 2 H(+) = thiamine phosphate + CO2 + diphosphate. It carries out the reaction 2-(2-carboxy-4-methylthiazol-5-yl)ethyl phosphate + 4-amino-2-methyl-5-(diphosphooxymethyl)pyrimidine + 2 H(+) = thiamine phosphate + CO2 + diphosphate. The catalysed reaction is 4-methyl-5-(2-phosphooxyethyl)-thiazole + 4-amino-2-methyl-5-(diphosphooxymethyl)pyrimidine + H(+) = thiamine phosphate + diphosphate. Its pathway is cofactor biosynthesis; thiamine diphosphate biosynthesis; thiamine phosphate from 4-amino-2-methyl-5-diphosphomethylpyrimidine and 4-methyl-5-(2-phosphoethyl)-thiazole: step 1/1. Its function is as follows. Condenses 4-methyl-5-(beta-hydroxyethyl)thiazole monophosphate (THZ-P) and 2-methyl-4-amino-5-hydroxymethyl pyrimidine pyrophosphate (HMP-PP) to form thiamine monophosphate (TMP). This Salmonella agona (strain SL483) protein is Thiamine-phosphate synthase.